A 423-amino-acid polypeptide reads, in one-letter code: GTPase HflX (423 aa).

The Hflx-type G domain maps to 201-363; that stretch reads IQLALVGYTN…KIEQALKGMM (163 aa). GTP contacts are provided by residues 207 to 214, 232 to 236, 254 to 257, 320 to 323, and 341 to 343; these read GYTNAGKS, FATLD, DTVG, NKAD, and SAY. Positions 214 and 234 each coordinate Mg(2+).

It belongs to the TRAFAC class OBG-HflX-like GTPase superfamily. HflX GTPase family. Monomer. Associates with the 50S ribosomal subunit. It depends on Mg(2+) as a cofactor.

It is found in the cytoplasm. Its function is as follows. GTPase that associates with the 50S ribosomal subunit and may have a role during protein synthesis or ribosome biogenesis. The protein is GTPase HflX of Alkalihalophilus pseudofirmus (strain ATCC BAA-2126 / JCM 17055 / OF4) (Bacillus pseudofirmus).